The primary structure comprises 865 residues: Centrosomal protein of 97 kDa (865 aa).

8 LRR repeats span residues 37–58 (DIHTLILDKNQIIKLENLEKCK), 59–80 (RLIQLSVANNRLVRMMGVAKLT), 81–102 (LLRVLNLPHNSIGCVEGLKELV), 103–124 (HLEWLNLAGNNLKAMEQINSCT), 125–146 (ALQHLDLSDNNISQIGDLSKLV), 147–168 (SLKTLLLHGNIITSLRMAPAYL), 171–192 (SLAILSLAENEIRDLNEISFLA), and 196–205 (ELEQLSIMNN). One can recognise an LRRCT domain in the interval 211 to 249 (TPSIPGFDYRPYIVSWCLNLRVLDGYVISQKESLKAEWL). The segment at 300-750 (HQRQLMNQSQ…RYGKESDLGD (451 aa)) is CCP110-binding. Ser308, Ser413, and Ser500 each carry phosphoserine. Residues 506–529 (ESTEQKQSDIKKPENTQPENKETI) are disordered. Residues 508–527 (TEQKQSDIKKPENTQPENKE) are compositionally biased toward basic and acidic residues. Ser530 is modified (phosphoserine). Thr542 carries the post-translational modification Phosphothreonine. The IQ domain maps to 558-587 (LNDAATKLQACWRGFYARNYNPQAKDVRYE). Residues 587–865 (EIRLRRMQEH…FQLLHVGVTV (279 aa)) are interaction with MPHOSPH9. Positions 715-769 (QHSLDFEKSSTEGSESSIMGNSIDTVRYGKESDLGDVSEEHGEWNKESSNNEQDN) are disordered. Residues 725–738 (TEGSESSIMGNSID) are compositionally biased toward polar residues. A compositionally biased stretch (basic and acidic residues) spans 741 to 760 (RYGKESDLGDVSEEHGEWNK). Ser763 is subject to Phosphoserine.

In terms of assembly, interacts with CALM1, CEP76, KIF24 and TALPID3. Interacts with CCP110. ENKD1 competes with CEP97 for binding to CCP110, destabilizing the interaction between CP110 and CEP97 which promotes the removal of CCP110 and CEP97 from the mother centriole and allows the initiation of ciliogenesis. Via its interaction with CCP110, may indirectly interact with HERC2 and NEURL4. Interacts with MPHOSPH9.

It localises to the cytoplasm. It is found in the cytoskeleton. The protein localises to the microtubule organizing center. Its subcellular location is the centrosome. The protein resides in the centriole. Its function is as follows. Acts as a key negative regulator of ciliogenesis in collaboration with CCP110 by capping the mother centriole thereby preventing cilia formation. Required for recruitment of CCP110 to the centrosome. In Homo sapiens (Human), this protein is Centrosomal protein of 97 kDa (CEP97).